A 246-amino-acid polypeptide reads, in one-letter code: Purine nucleoside phosphorylase Cgl2154/cg2365 (246 aa).

Positions 68, 107, and 124 each coordinate Zn(2+).

This sequence belongs to the purine nucleoside phosphorylase YfiH/LACC1 family. As to quaternary structure, homodimer. The cofactor is Cu(2+). It depends on Zn(2+) as a cofactor.

The enzyme catalyses adenosine + phosphate = alpha-D-ribose 1-phosphate + adenine. The catalysed reaction is S-methyl-5'-thioadenosine + phosphate = 5-(methylsulfanyl)-alpha-D-ribose 1-phosphate + adenine. It carries out the reaction inosine + phosphate = alpha-D-ribose 1-phosphate + hypoxanthine. It catalyses the reaction adenosine + H2O + H(+) = inosine + NH4(+). Its function is as follows. Purine nucleoside enzyme that catalyzes the phosphorolysis of adenosine and inosine nucleosides, yielding D-ribose 1-phosphate and the respective free bases, adenine and hypoxanthine. Also catalyzes the phosphorolysis of S-methyl-5'-thioadenosine into adenine and S-methyl-5-thio-alpha-D-ribose 1-phosphate. Also has adenosine deaminase activity. The chain is Purine nucleoside phosphorylase Cgl2154/cg2365 from Corynebacterium glutamicum (strain ATCC 13032 / DSM 20300 / JCM 1318 / BCRC 11384 / CCUG 27702 / LMG 3730 / NBRC 12168 / NCIMB 10025 / NRRL B-2784 / 534).